The sequence spans 458 residues: Tol-Pal system protein TolB (458 aa).

Positions 1–23 (MSSVIRKWALTALMAVSSTALFA) are cleaved as a signal peptide.

This sequence belongs to the TolB family. The Tol-Pal system is composed of five core proteins: the inner membrane proteins TolA, TolQ and TolR, the periplasmic protein TolB and the outer membrane protein Pal. They form a network linking the inner and outer membranes and the peptidoglycan layer.

It is found in the periplasm. Its function is as follows. Part of the Tol-Pal system, which plays a role in outer membrane invagination during cell division and is important for maintaining outer membrane integrity. This Zymomonas mobilis subsp. mobilis (strain ATCC 31821 / ZM4 / CP4) protein is Tol-Pal system protein TolB.